The primary structure comprises 95 residues: Co-chaperonin GroES (95 aa).

This sequence belongs to the GroES chaperonin family. In terms of assembly, heptamer of 7 subunits arranged in a ring. Interacts with the chaperonin GroEL.

It is found in the cytoplasm. Its function is as follows. Together with the chaperonin GroEL, plays an essential role in assisting protein folding. The GroEL-GroES system forms a nano-cage that allows encapsulation of the non-native substrate proteins and provides a physical environment optimized to promote and accelerate protein folding. GroES binds to the apical surface of the GroEL ring, thereby capping the opening of the GroEL channel. The polypeptide is Co-chaperonin GroES (Ruegeria sp. (strain TM1040) (Silicibacter sp.)).